Reading from the N-terminus, the 490-residue chain is Tryptophan decarboxylase (490 aa).

At K306 the chain carries N6-(pyridoxal phosphate)lysine.

It belongs to the group II decarboxylase family. As to quaternary structure, homodimer. The cofactor is pyridoxal 5'-phosphate.

It is found in the cytoplasm. It carries out the reaction L-tryptophan + H(+) = tryptamine + CO2. Its activity is regulated as follows. Inhibited by (S)-alpha-fluoromethyltryptophan. Functionally, catalyzes the decarboxylation of tryptophan to tryptamine. Tryptamine is a neurotransmitter that induces the release of serotonin, which is suggested to modulate gastrointestinal motility. Therefore, the tryptophan decarboxylase from the gut bacteria Ruminococcus gnavus (strain ATCC 29149 / VPI C7-9) may influence host brain and behavior. Has weak activity with tyrosine and phenylalanine. This Mediterraneibacter gnavus (strain ATCC 29149 / DSM 114966 / JCM 6515 / VPI C7-9) (Ruminococcus gnavus) protein is Tryptophan decarboxylase.